The primary structure comprises 59 residues: Large ribosomal subunit protein uL30 (59 aa).

It belongs to the universal ribosomal protein uL30 family. As to quaternary structure, part of the 50S ribosomal subunit.

The protein is Large ribosomal subunit protein uL30 of Geobacter sulfurreducens (strain ATCC 51573 / DSM 12127 / PCA).